The primary structure comprises 308 residues: tRNA dimethylallyltransferase (308 aa).

ATP is bound at residue 14–21; the sequence is GPTASGKT. 16-21 is a binding site for substrate; that stretch reads TASGKT. 3 interaction with substrate tRNA regions span residues 39 to 42, 163 to 167, and 244 to 249; these read DSAL, QRLSR, and RCVGYR.

It belongs to the IPP transferase family. In terms of assembly, monomer. Mg(2+) is required as a cofactor.

It carries out the reaction adenosine(37) in tRNA + dimethylallyl diphosphate = N(6)-dimethylallyladenosine(37) in tRNA + diphosphate. Catalyzes the transfer of a dimethylallyl group onto the adenine at position 37 in tRNAs that read codons beginning with uridine, leading to the formation of N6-(dimethylallyl)adenosine (i(6)A). This chain is tRNA dimethylallyltransferase, found in Shewanella oneidensis (strain ATCC 700550 / JCM 31522 / CIP 106686 / LMG 19005 / NCIMB 14063 / MR-1).